Consider the following 744-residue polypeptide: Glucosamine inositolphosphorylceramide transferase 1 (744 aa).

Transmembrane regions (helical) follow at residues phenylalanine 31 to valine 51, serine 378 to valine 398, and leucine 460 to leucine 480. Substrate-binding positions include asparagine 534, asparagine 558–arginine 563, aspartate 579–aspartate 581, arginine 609, and phenylalanine 665–aspartate 669. Aspartate 581 provides a ligand contact to Mn(2+). Residues cysteine 667 and cysteine 718 are joined by a disulfide bond. Aspartate 669 is a catalytic residue.

Belongs to the glycosyltransferase 64 family. The cofactor is Mn(2+).

Its subcellular location is the membrane. It participates in sphingolipid metabolism. In terms of biological role, essential protein. Glycosyltransferase that mediates the glycosylation of glycosylinositol phosphorylceramides (GIPCs), the major sphingolipids in the plasma membrane; acts as a HexN(Ac)-specific GIPC sugar transferase. Responsible for the glycosylation of a subgroup of GIPCs found in seeds and pollen that contain GlcNAc and GlcN (GlcN(Ac)). Maybe involved in the maintenance of cell-cell adhesion. The sequence is that of Glucosamine inositolphosphorylceramide transferase 1 from Oryza sativa subsp. indica (Rice).